The chain runs to 740 residues: Phosphoribosylformylglycinamidine synthase subunit PurL (740 aa).

The active site involves His50. 2 residues coordinate ATP: Tyr53 and Lys92. Glu94 contacts Mg(2+). Substrate contacts are provided by residues 95–98 (SHNH) and Arg117. Catalysis depends on His96, which acts as the Proton acceptor. A Mg(2+)-binding site is contributed by Asp118. Gln241 provides a ligand contact to substrate. Residue Asp269 coordinates Mg(2+). 313-315 (ESQ) provides a ligand contact to substrate. 2 residues coordinate ATP: Asp495 and Gly532. Mg(2+) is bound at residue Asn533. Ser535 contacts substrate.

Belongs to the FGAMS family. As to quaternary structure, monomer. Part of the FGAM synthase complex composed of 1 PurL, 1 PurQ and 2 PurS subunits.

It is found in the cytoplasm. The catalysed reaction is N(2)-formyl-N(1)-(5-phospho-beta-D-ribosyl)glycinamide + L-glutamine + ATP + H2O = 2-formamido-N(1)-(5-O-phospho-beta-D-ribosyl)acetamidine + L-glutamate + ADP + phosphate + H(+). The protein operates within purine metabolism; IMP biosynthesis via de novo pathway; 5-amino-1-(5-phospho-D-ribosyl)imidazole from N(2)-formyl-N(1)-(5-phospho-D-ribosyl)glycinamide: step 1/2. In terms of biological role, part of the phosphoribosylformylglycinamidine synthase complex involved in the purines biosynthetic pathway. Catalyzes the ATP-dependent conversion of formylglycinamide ribonucleotide (FGAR) and glutamine to yield formylglycinamidine ribonucleotide (FGAM) and glutamate. The FGAM synthase complex is composed of three subunits. PurQ produces an ammonia molecule by converting glutamine to glutamate. PurL transfers the ammonia molecule to FGAR to form FGAM in an ATP-dependent manner. PurS interacts with PurQ and PurL and is thought to assist in the transfer of the ammonia molecule from PurQ to PurL. This chain is Phosphoribosylformylglycinamidine synthase subunit PurL, found in Brucella canis (strain ATCC 23365 / NCTC 10854 / RM-666).